The sequence spans 321 residues: MVTVLDAIANAPRLRHPEKAHKPDQEVLRKPDWIRVKAPVSKGYAETREIVKSHKLVTVCEEAGCPNIGECWEKKHATFMIMGEICTRACAFCNVATGIPTALDPDEPARVAHAVKQMGLSHVVITSVDRDDLADGGAQHFADVIRAIRAATPSTTIEILTPDFLRKDGALEIVVAARPDVFNHNLETVPSNYLKVRPGARYFHSIRLLQRVKELDPSIFTKSGIMVGLGEERNEILQLMDDLRSANVDFMTIGQYLQPSKKHHPVIRFVTPEEFKSFETIGRTKGFLLVASSPLTRSSHHAGDDFARLRAAREAQLQKSV.

7 residues coordinate [4Fe-4S] cluster: Cys60, Cys65, Cys71, Cys86, Cys90, Cys93, and Ser299. One can recognise a Radical SAM core domain in the interval 72–288 (WEKKHATFMI…ETIGRTKGFL (217 aa)).

This sequence belongs to the radical SAM superfamily. Lipoyl synthase family. [4Fe-4S] cluster serves as cofactor.

It is found in the cytoplasm. The catalysed reaction is [[Fe-S] cluster scaffold protein carrying a second [4Fe-4S](2+) cluster] + N(6)-octanoyl-L-lysyl-[protein] + 2 oxidized [2Fe-2S]-[ferredoxin] + 2 S-adenosyl-L-methionine + 4 H(+) = [[Fe-S] cluster scaffold protein] + N(6)-[(R)-dihydrolipoyl]-L-lysyl-[protein] + 4 Fe(3+) + 2 hydrogen sulfide + 2 5'-deoxyadenosine + 2 L-methionine + 2 reduced [2Fe-2S]-[ferredoxin]. It functions in the pathway protein modification; protein lipoylation via endogenous pathway; protein N(6)-(lipoyl)lysine from octanoyl-[acyl-carrier-protein]: step 2/2. In terms of biological role, catalyzes the radical-mediated insertion of two sulfur atoms into the C-6 and C-8 positions of the octanoyl moiety bound to the lipoyl domains of lipoate-dependent enzymes, thereby converting the octanoylated domains into lipoylated derivatives. This chain is Lipoyl synthase, found in Mesorhizobium japonicum (strain LMG 29417 / CECT 9101 / MAFF 303099) (Mesorhizobium loti (strain MAFF 303099)).